The sequence spans 182 residues: Lipoprotein signal peptidase (182 aa).

Helical transmembrane passes span 15 to 35 (LYIG…FLVI), 44 to 64 (LEVL…FVFG), 65 to 85 (AFQD…VFLI), and 97 to 117 (PWGW…KFFV). Residues D140 and D162 contribute to the active site. Residues 155–175 (WPAFNVADSCVTIGLTILIFT) traverse the membrane as a helical segment.

This sequence belongs to the peptidase A8 family.

The protein resides in the cell inner membrane. It catalyses the reaction Release of signal peptides from bacterial membrane prolipoproteins. Hydrolyzes -Xaa-Yaa-Zaa-|-(S,diacylglyceryl)Cys-, in which Xaa is hydrophobic (preferably Leu), and Yaa (Ala or Ser) and Zaa (Gly or Ala) have small, neutral side chains.. It participates in protein modification; lipoprotein biosynthesis (signal peptide cleavage). Functionally, this protein specifically catalyzes the removal of signal peptides from prolipoproteins. The sequence is that of Lipoprotein signal peptidase from Leptospira borgpetersenii serovar Hardjo-bovis (strain L550).